The chain runs to 501 residues: Glucose-6-phosphate exchanger SLC37A2 (501 aa).

Residues 19–39 (SWFRGLILLLTFLIYACYHMS) traverse the membrane as a helical segment. Residues Asn-53, Asn-62, and Asn-68 are each glycosylated (N-linked (GlcNAc...) asparagine). The next 5 helical transmembrane spans lie at 88-108 (GGVD…SGVF), 118-138 (LSAG…GYFW), 145-165 (YFVV…PSVV), 189-209 (SVGN…QWGL), and 210-230 (SFIV…LFLI). The disordered stretch occupies residues 240–262 (PPQHHGEPAENQDNPEDPGNSPC). 6 helical membrane passes run 302-322 (LCLL…PLYI), 334-354 (GDLS…AGLV), 362-382 (ATTC…YNYI), 391-411 (IVML…ITTA), 434-454 (AIID…AGLI), and 462-482 (VFYM…RLVY).

The protein belongs to the major facilitator superfamily. Organophosphate:Pi antiporter (OPA) (TC 2.A.1.4) family. In terms of tissue distribution, detected in intestine and pancreas. Lower expression is also detected in liver and kidney.

It is found in the endoplasmic reticulum membrane. The catalysed reaction is D-glucose 6-phosphate(in) + phosphate(out) = D-glucose 6-phosphate(out) + phosphate(in). Its activity is regulated as follows. Inhibited by vanadate but not by chlorogenic acid. In terms of biological role, inorganic phosphate and glucose-6-phosphate antiporter. May transport cytoplasmic glucose-6-phosphate into the lumen of the endoplasmic reticulum and translocate inorganic phosphate into the opposite direction. Independent of a lumenal glucose-6-phosphatase. May not play a role in homeostatic regulation of blood glucose levels. This Homo sapiens (Human) protein is Glucose-6-phosphate exchanger SLC37A2.